The chain runs to 105 residues: MESALNQEFQIDFCVKNKKLLKILANVLIASWLSFVVFLILGCIAIDLFRFDLYSQFFFNHLSTLSALAWTFFVLAILFGAATLAINGFFYKEIRKKSAFKEDSK.

A run of 2 helical transmembrane segments spans residues 26–46 (NVLI…CIAI) and 66–86 (SALA…TLAI).

The protein localises to the cell membrane. This is an uncharacterized protein from Mycoplasma pneumoniae (strain ATCC 29342 / M129 / Subtype 1) (Mycoplasmoides pneumoniae).